A 204-amino-acid polypeptide reads, in one-letter code: Regulatory protein RecX (204 aa).

Residues 1 to 22 show a composition bias toward polar residues; sequence MTKSSRPQSISDSVSVAGSQGT. Positions 1–44 are disordered; sequence MTKSSRPQSISDSVSVAGSQGTLDDLRARVASVPEAPTREPVDS.

It belongs to the RecX family.

It is found in the cytoplasm. Functionally, modulates RecA activity. The protein is Regulatory protein RecX of Mycobacteroides abscessus (strain ATCC 19977 / DSM 44196 / CCUG 20993 / CIP 104536 / JCM 13569 / NCTC 13031 / TMC 1543 / L948) (Mycobacterium abscessus).